Here is a 207-residue protein sequence, read N- to C-terminus: Elongation factor 1-beta (207 aa).

At A2 the chain carries N-acetylalanine. The segment at 70–96 (FPGIPTSASKEEDDDVDLFGSDEEDEE) is disordered. The segment covering 80–96 (EEDDDVDLFGSDEEDEE) has biased composition (acidic residues). S90 is subject to Phosphoserine; by CK2.

It belongs to the EF-1-beta/EF-1-delta family. EF-1 is composed of 4 subunits: alpha, beta, delta, and gamma. Phosphorylation affects the GDP/GTP exchange rate.

EF-1-beta and EF-1-delta stimulate the exchange of GDP bound to EF-1-alpha to GTP. This chain is Elongation factor 1-beta, found in Artemia salina (Brine shrimp).